Consider the following 466-residue polypeptide: Trigger factor (466 aa).

The 82-residue stretch at 162–243 folds into the PPIase FKBP-type domain; sequence GDVVSIDLSA…VRSVKERELP (82 aa). The interval 428–466 is disordered; the sequence is GNTIDTSEFFGKRVSAGEAEEAEPADEGAARAASDEATT. Positions 457–466 are enriched in low complexity; sequence ARAASDEATT.

This sequence belongs to the FKBP-type PPIase family. Tig subfamily.

Its subcellular location is the cytoplasm. It carries out the reaction [protein]-peptidylproline (omega=180) = [protein]-peptidylproline (omega=0). Involved in protein export. Acts as a chaperone by maintaining the newly synthesized protein in an open conformation. Functions as a peptidyl-prolyl cis-trans isomerase. This Mycobacterium bovis (strain BCG / Tokyo 172 / ATCC 35737 / TMC 1019) protein is Trigger factor.